The primary structure comprises 185 residues: ATP synthase subunit delta (185 aa).

The protein belongs to the ATPase delta chain family. As to quaternary structure, F-type ATPases have 2 components, F(1) - the catalytic core - and F(0) - the membrane proton channel. F(1) has five subunits: alpha(3), beta(3), gamma(1), delta(1), epsilon(1). CF(0) has four main subunits: a(1), b(1), b'(1) and c(10-14). The alpha and beta chains form an alternating ring which encloses part of the gamma chain. F(1) is attached to F(0) by a central stalk formed by the gamma and epsilon chains, while a peripheral stalk is formed by the delta, b and b' chains.

It localises to the cell inner membrane. In terms of biological role, f(1)F(0) ATP synthase produces ATP from ADP in the presence of a proton or sodium gradient. F-type ATPases consist of two structural domains, F(1) containing the extramembraneous catalytic core and F(0) containing the membrane proton channel, linked together by a central stalk and a peripheral stalk. During catalysis, ATP synthesis in the catalytic domain of F(1) is coupled via a rotary mechanism of the central stalk subunits to proton translocation. This protein is part of the stalk that links CF(0) to CF(1). It either transmits conformational changes from CF(0) to CF(1) or is implicated in proton conduction. The protein is ATP synthase subunit delta of Gloeobacter violaceus (strain ATCC 29082 / PCC 7421).